A 153-amino-acid chain; its full sequence is Transthyretin (153 aa).

Positions 1–24 (MAYYNTLALLTIFIFSGAFHRAQG) are cleaved as a signal peptide. Residue cysteine 33 is modified to Sulfocysteine. Positions 38, 77, and 140 each coordinate L-thyroxine.

The protein belongs to the transthyretin family. In terms of assembly, homotetramer. Dimer of dimers. In the homotetramer, subunits assemble around a central channel that can accommodate two ligand molecules. Interacts with RBP4. Post-translationally, sulfonation of the reactive cysteine Cys-33 enhances the stability of the native conformation of TTR, avoiding misassembly of the protein leading to amyloid formation. As to expression, detected in plasma (at protein level). Expressed during metamorphosis in tadpole liver but not in tadpole brain, nor adult liver.

The protein localises to the secreted. In terms of biological role, thyroid hormone-binding protein, with a much higher binding affinity for triiodothyronine (T3) than for thyroxine (T4). Probably transports triiodothyronine from the bloodstream to the brain. The sequence is that of Transthyretin from Aquarana catesbeiana (American bullfrog).